The chain runs to 804 residues: DNA mismatch repair protein MutS (804 aa).

An ATP-binding site is contributed by 614-621; the sequence is GPNMAGKS.

It belongs to the DNA mismatch repair MutS family.

This protein is involved in the repair of mismatches in DNA. It is possible that it carries out the mismatch recognition step. This protein has a weak ATPase activity. The polypeptide is DNA mismatch repair protein MutS (Ehrlichia ruminantium (strain Gardel)).